We begin with the raw amino-acid sequence, 159 residues long: Anaerobic nitrite reductase HB2 (159 aa).

The Globin domain maps to 2-152; that stretch reads GFTEKQEGLV…LAEAIKAEMK (151 aa). Residues 35-39 carry the Homodimerization motif; sequence EIAPG. Heme b is bound by residues serine 45, lysine 59, histidine 63, and histidine 98. The Homodimerization signature appears at 105–117; it reads DPHFEVVKEALLR.

Belongs to the plant globin family. Homodimer. Heme b serves as cofactor.

The protein localises to the cytoplasm. Its subcellular location is the nucleus. It catalyses the reaction Fe(III)-heme b-[protein] + nitric oxide + H2O = Fe(II)-heme b-[protein] + nitrite + 2 H(+). Phytoglobin that reduces nitrite to nitric oxide (NO) under anoxic conditions (e.g. during flooding or in waterlogged soil). May not function as an oxygen storage or transport protein. Has an unusually high affinity for O(2) through an hexacoordinate heme iron because of a very low dissociation constant. The sequence is that of Anaerobic nitrite reductase HB2 from Gossypium hirsutum (Upland cotton).